The sequence spans 235 residues: Glial cell line-derived neurotrophic factor (235 aa).

The N-terminal stretch at 1–19 (MKLWDILATCLLLLSSVST) is a signal peptide. The propeptide occupies 20 to 87 (RPLFHKLQPS…DFIEATLGRL (68 aa)). Disordered stretches follow at residues 34–60 (VRSE…ASME) and 91–137 (SDVE…RVKG). The segment covering 119–128 (GERKRSRGRA) has biased composition (basic residues). Intrachain disulfides connect Cys142-Cys203, Cys169-Cys232, and Cys173-Cys234. 2 N-linked (GlcNAc...) asparagine glycosylation sites follow: Asn150 and Asn186.

It belongs to the TGF-beta family. GDNF subfamily. As to quaternary structure, homodimer; disulfide-linked. Interacts with GFRA1 coreceptor and RET: forms a 2:2:2 ternary complex composed of GDNF ligand, GFRA1 and RET receptor. First expressed at 14 hours post-fertilization (hpf) in the ventral half of anterior somites and in intermediate mesoderm. Ventral somitic expression persists and extends more posteriorly over the next 12 hours. Expressed throughout the ventral trunk mesoderm and endoderm at 24 hpf. By 30 hpf, somitic expression ceases and by 36 hpf, expression becomes restricted to the endodermal cells forming the gut, with expression along the whole length of the developing gut tube at 72 hpf.

It localises to the secreted. Neurotrophic factor that enhances survival and morphological differentiation of dopaminergic neurons and increases their high-affinity dopamine uptake. Acts by binding to its coreceptor, GFRA1, leading to autophosphorylation and activation of the RET receptor. In Danio rerio (Zebrafish), this protein is Glial cell line-derived neurotrophic factor.